Consider the following 744-residue polypeptide: Polyribonucleotide nucleotidyltransferase (744 aa).

Asp487 and Asp493 together coordinate Mg(2+). Residues 554–613 form the KH domain; that stretch reads PSTTTLKVDKDKIRDIIGPGGKVIKEICETSGAKIDISDDGTVSIYASDKDKLKVALDKV. Residues 623–691 form the S1 motif domain; sequence GEVFNGTVMK…NKGKAKLTIK (69 aa). Positions 691 to 744 are disordered; sequence KNAEKDKSSANPKPKNSPKEHQEPEKRDNGKKRAWNEDNNAETTEVVTERKYFS. Basic and acidic residues predominate over residues 707–718; sequence SPKEHQEPEKRD. The segment covering 727 to 736 has biased composition (polar residues); it reads EDNNAETTEV.

This sequence belongs to the polyribonucleotide nucleotidyltransferase family. Mg(2+) is required as a cofactor.

The protein localises to the cytoplasm. The enzyme catalyses RNA(n+1) + phosphate = RNA(n) + a ribonucleoside 5'-diphosphate. In terms of biological role, involved in mRNA degradation. Catalyzes the phosphorolysis of single-stranded polyribonucleotides processively in the 3'- to 5'-direction. In Rickettsia bellii (strain OSU 85-389), this protein is Polyribonucleotide nucleotidyltransferase.